A 238-amino-acid polypeptide reads, in one-letter code: Large ribosomal subunit protein bL17m (238 aa).

Belongs to the bacterial ribosomal protein bL17 family. In terms of assembly, component of the mitochondrial large ribosomal subunit (mt-LSU). Mature yeast 74S mitochondrial ribosomes consist of a small (37S) and a large (54S) subunit. The 37S small subunit contains a 15S ribosomal RNA (15S mt-rRNA) and 34 different proteins. The 54S large subunit contains a 21S rRNA (21S mt-rRNA) and 46 different proteins.

The protein localises to the mitochondrion. Component of the mitochondrial ribosome (mitoribosome), a dedicated translation machinery responsible for the synthesis of mitochondrial genome-encoded proteins, including at least some of the essential transmembrane subunits of the mitochondrial respiratory chain. The mitoribosomes are attached to the mitochondrial inner membrane and translation products are cotranslationally integrated into the membrane. In Saccharomyces cerevisiae (strain ATCC 204508 / S288c) (Baker's yeast), this protein is Large ribosomal subunit protein bL17m (MRPL8).